The sequence spans 206 residues: Emopamil-binding protein-like (206 aa).

4 helical membrane passes run 10–30, 42–62, 101–121, and 165–185; these read EAGG…ALGL, GALI…GPFV, VEIL…YAIV, and CWLY…LLLW. The EXPERA domain maps to 39 to 184; the sequence is ADRGALIWLC…VWVLIPGLLL (146 aa).

This sequence belongs to the EBP family. In terms of assembly, homodimer. As to expression, widely expressed with highest levels in liver, lung and kidney.

The protein localises to the endoplasmic reticulum membrane. In terms of biological role, does not possess sterol isomerase activity and does not bind sigma ligands. The chain is Emopamil-binding protein-like (EBPL) from Homo sapiens (Human).